Consider the following 308-residue polypeptide: Elongation factor Ts (308 aa).

Residues 80–83 (TDFV) are involved in Mg(2+) ion dislocation from EF-Tu.

The protein belongs to the EF-Ts family.

It is found in the cytoplasm. In terms of biological role, associates with the EF-Tu.GDP complex and induces the exchange of GDP to GTP. It remains bound to the aminoacyl-tRNA.EF-Tu.GTP complex up to the GTP hydrolysis stage on the ribosome. In Methylobacterium radiotolerans (strain ATCC 27329 / DSM 1819 / JCM 2831 / NBRC 15690 / NCIMB 10815 / 0-1), this protein is Elongation factor Ts.